The primary structure comprises 34 residues: MSDIN-like toxin proprotein 4 (34 aa).

Positions methionine 1–proline 10 are excised as a propeptide. The segment at residues leucine 11–proline 20 is a cross-link (cyclopeptide (Leu-Pro)). Residues cysteine 21 to glutamate 34 constitute a propeptide that is removed on maturation.

The protein belongs to the MSDIN fungal toxin family. In terms of processing, processed by the macrocyclase-peptidase enzyme POPB to yield a toxic cyclic decapeptide. POPB first removes 10 residues from the N-terminus. Conformational trapping of the remaining peptide forces the enzyme to release this intermediate rather than proceed to macrocyclization. The enzyme rebinds the remaining peptide in a different conformation and catalyzes macrocyclization of the N-terminal 10 residues.

Its function is as follows. Probable toxin that belongs to the MSDIN-like toxin family responsible for a large number of food poisoning cases and deaths. This Amanita bisporigera (Destroying angel) protein is MSDIN-like toxin proprotein 4.